The primary structure comprises 380 residues: Cytochrome b (380 aa).

Transmembrane regions (helical) follow at residues 34–54 (FGSL…LLAA), 78–99 (WLIR…YLHI), 114–134 (WNTG…GYVL), and 179–199 (FFTL…IHLT). Residues His84 and His98 each coordinate heme b. Heme b is bound by residues His183 and His197. His202 serves as a coordination point for a ubiquinone. A run of 4 helical transmembrane segments spans residues 227–247 (LKDI…ALFS), 289–309 (LGGV…PLLH), 321–341 (FSQL…WVGS), and 348–368 (FIII…ILFP).

It belongs to the cytochrome b family. As to quaternary structure, the cytochrome bc1 complex contains 11 subunits: 3 respiratory subunits (MT-CYB, CYC1 and UQCRFS1), 2 core proteins (UQCRC1 and UQCRC2) and 6 low-molecular weight proteins (UQCRH/QCR6, UQCRB/QCR7, UQCRQ/QCR8, UQCR10/QCR9, UQCR11/QCR10 and a cleavage product of UQCRFS1). This cytochrome bc1 complex then forms a dimer. Heme b is required as a cofactor.

It localises to the mitochondrion inner membrane. In terms of biological role, component of the ubiquinol-cytochrome c reductase complex (complex III or cytochrome b-c1 complex) that is part of the mitochondrial respiratory chain. The b-c1 complex mediates electron transfer from ubiquinol to cytochrome c. Contributes to the generation of a proton gradient across the mitochondrial membrane that is then used for ATP synthesis. This chain is Cytochrome b (MT-CYB), found in Antigone rubicunda (Brolga crane).